Reading from the N-terminus, the 316-residue chain is 4-hydroxy-3-methylbut-2-enyl diphosphate reductase (316 aa).

Position 12 (cysteine 12) interacts with [4Fe-4S] cluster. Residues histidine 41 and histidine 74 each contribute to the (2E)-4-hydroxy-3-methylbut-2-enyl diphosphate site. Dimethylallyl diphosphate is bound by residues histidine 41 and histidine 74. Residues histidine 41 and histidine 74 each contribute to the isopentenyl diphosphate site. [4Fe-4S] cluster is bound at residue cysteine 96. Histidine 124 is a (2E)-4-hydroxy-3-methylbut-2-enyl diphosphate binding site. A dimethylallyl diphosphate-binding site is contributed by histidine 124. Histidine 124 is a binding site for isopentenyl diphosphate. The active-site Proton donor is the glutamate 126. Threonine 167 serves as a coordination point for (2E)-4-hydroxy-3-methylbut-2-enyl diphosphate. Cysteine 197 serves as a coordination point for [4Fe-4S] cluster. (2E)-4-hydroxy-3-methylbut-2-enyl diphosphate contacts are provided by serine 225, serine 226, asparagine 227, and serine 269. Positions 225, 226, 227, and 269 each coordinate dimethylallyl diphosphate. Residues serine 225, serine 226, asparagine 227, and serine 269 each contribute to the isopentenyl diphosphate site.

Belongs to the IspH family. In terms of assembly, homodimer. The cofactor is [4Fe-4S] cluster.

The enzyme catalyses isopentenyl diphosphate + 2 oxidized [2Fe-2S]-[ferredoxin] + H2O = (2E)-4-hydroxy-3-methylbut-2-enyl diphosphate + 2 reduced [2Fe-2S]-[ferredoxin] + 2 H(+). The catalysed reaction is dimethylallyl diphosphate + 2 oxidized [2Fe-2S]-[ferredoxin] + H2O = (2E)-4-hydroxy-3-methylbut-2-enyl diphosphate + 2 reduced [2Fe-2S]-[ferredoxin] + 2 H(+). The protein operates within isoprenoid biosynthesis; dimethylallyl diphosphate biosynthesis; dimethylallyl diphosphate from (2E)-4-hydroxy-3-methylbutenyl diphosphate: step 1/1. It participates in isoprenoid biosynthesis; isopentenyl diphosphate biosynthesis via DXP pathway; isopentenyl diphosphate from 1-deoxy-D-xylulose 5-phosphate: step 6/6. In terms of biological role, catalyzes the conversion of 1-hydroxy-2-methyl-2-(E)-butenyl 4-diphosphate (HMBPP) into a mixture of isopentenyl diphosphate (IPP) and dimethylallyl diphosphate (DMAPP). Acts in the terminal step of the DOXP/MEP pathway for isoprenoid precursor biosynthesis. The protein is 4-hydroxy-3-methylbut-2-enyl diphosphate reductase of Klebsiella pneumoniae (strain 342).